A 133-amino-acid chain; its full sequence is ATP synthase epsilon chain, sodium ion specific (133 aa).

The protein belongs to the ATPase epsilon chain family. In terms of assembly, F-type ATPases have 2 components, CF(1) - the catalytic core - and CF(0) - the membrane proton channel. CF(1) has five subunits: alpha(3), beta(3), gamma(1), delta(1), epsilon(1). CF(0) has three main subunits: a, b and c.

Its subcellular location is the cell membrane. Its activity is regulated as follows. Inhibited by nitrate. Its function is as follows. Produces ATP from ADP in the presence of a sodium gradient across the membrane. The protein is ATP synthase epsilon chain, sodium ion specific (atpC) of Acetobacterium woodii (strain ATCC 29683 / DSM 1030 / JCM 2381 / KCTC 1655 / WB1).